The following is an 83-amino-acid chain: Conotoxin LiCr95 (83 aa).

A signal peptide spans 1–22 (MKLTCALIVAMLFLTACQLTTT). A propeptide spanning residues 23–50 (DDSRGRQKYPTERLRVKMRNPKLSKLTK) is cleaved from the precursor. Intrachain disulfides connect Cys52–Cys67, Cys59–Cys71, and Cys66–Cys80.

The protein belongs to the conotoxin O1 superfamily. As to expression, expressed by the venom duct.

The protein resides in the secreted. The sequence is that of Conotoxin LiCr95 from Conus lividus (Livid cone).